Reading from the N-terminus, the 156-residue chain is Cyclic pyranopterin monophosphate synthase (156 aa).

Substrate-binding positions include 73–75 (LCH) and 110–111 (ME). Residue Asp-125 is part of the active site.

This sequence belongs to the MoaC family. Homohexamer; trimer of dimers.

The catalysed reaction is (8S)-3',8-cyclo-7,8-dihydroguanosine 5'-triphosphate = cyclic pyranopterin phosphate + diphosphate. It participates in cofactor biosynthesis; molybdopterin biosynthesis. Functionally, catalyzes the conversion of (8S)-3',8-cyclo-7,8-dihydroguanosine 5'-triphosphate to cyclic pyranopterin monophosphate (cPMP). The sequence is that of Cyclic pyranopterin monophosphate synthase from Stutzerimonas stutzeri (strain A1501) (Pseudomonas stutzeri).